The primary structure comprises 279 residues: Dermonecrotic toxin LrSicTox-alphaIA1i (279 aa).

Residue H11 is part of the active site. Residues E31 and D33 each coordinate Mg(2+). H47 serves as the catalytic Nucleophile. Intrachain disulfides connect C51-C57 and C53-C196. D91 is a Mg(2+) binding site. An N-linked (GlcNAc...) asparagine glycan is attached at N256.

The protein belongs to the arthropod phospholipase D family. Class II subfamily. Mg(2+) is required as a cofactor. Expressed by the venom gland.

Its subcellular location is the secreted. It carries out the reaction an N-(acyl)-sphingosylphosphocholine = an N-(acyl)-sphingosyl-1,3-cyclic phosphate + choline. The catalysed reaction is an N-(acyl)-sphingosylphosphoethanolamine = an N-(acyl)-sphingosyl-1,3-cyclic phosphate + ethanolamine. The enzyme catalyses a 1-acyl-sn-glycero-3-phosphocholine = a 1-acyl-sn-glycero-2,3-cyclic phosphate + choline. It catalyses the reaction a 1-acyl-sn-glycero-3-phosphoethanolamine = a 1-acyl-sn-glycero-2,3-cyclic phosphate + ethanolamine. With respect to regulation, inhibited with low affinity by edelfosine. Its function is as follows. Dermonecrotic toxins cleave the phosphodiester linkage between the phosphate and headgroup of certain phospholipids (sphingolipid and lysolipid substrates), forming an alcohol (often choline) and a cyclic phosphate. This toxin acts on sphingomyelin (SM). It also acts on a broad range of lysophospholipids, like lysophosphatidylinositol (LPI), lysophosphatidylglycerol (LPG), lysophosphatidylethanolamine (LPE), lysobisphosphatidic acid (LBPA), lysophosphatidylserine (LPS) and lysophosphatidylcholines (LPC) of varying chain lengths. The substrate preference is LPI &gt; LPG &gt; LPS &gt; LPC &gt;&gt; LPE, LBPA. Furthermore, the enzyme also act on cyclic phosphatidic acid and lyso-platelet activating factor (LPAF, an alkyl-LPC). The enzyme does not act on sphingosylphosphorylcholine (SPC, also known as lyso-sphingomyelin) and PAF. The toxin may also act on ceramide phosphoethanolamine (CPE). It acts by transphosphatidylation, releasing exclusively cyclic phosphate products as second products. It does not exhibit detectable PLA1/2 activity. It induces dose-dependent hemolysis and dermonecrosis. Also induces increased vascular permeability, edema, inflammatory response, and platelet aggregation. The chain is Dermonecrotic toxin LrSicTox-alphaIA1i from Loxosceles reclusa (Brown recluse spider).